The sequence spans 772 residues: Acyl-homoserine lactone acylase PvdQ (772 aa).

The N-terminal stretch at 1-28 (MPVFPFCRPMTCAGLAAALVAFSVGVQA) is a signal peptide. Residues 199-220 (AQSSAGFASALARQERFAAERG) constitute a propeptide, spacer peptide. The active-site Nucleophile is S221.

It belongs to the peptidase S45 family. As to quaternary structure, heterodimer of an alpha subunit and a beta subunit processed from the same precursor.

The protein resides in the periplasm. It carries out the reaction an N-acyl-L-homoserine lactone + H2O = L-homoserine lactone + a carboxylate. Catalyzes the deacylation of acyl-homoserine lactone (AHL or acyl-HSL), releasing homoserine lactone (HSL) and the corresponding fatty acid. Possesses a specificity for the degradation of long-chain acyl-HSLs (side chains of 11 to 14 carbons in length). This chain is Acyl-homoserine lactone acylase PvdQ (pvdQ), found in Pseudomonas putida (strain ATCC 47054 / DSM 6125 / CFBP 8728 / NCIMB 11950 / KT2440).